Consider the following 254-residue polypeptide: Triosephosphate isomerase (254 aa).

A substrate-binding site is contributed by 9–11; that stretch reads NWK. The Electrophile role is filled by His96. Glu168 serves as the catalytic Proton acceptor. Substrate contacts are provided by Gly174 and Ser213.

It belongs to the triosephosphate isomerase family. In terms of assembly, homodimer.

The protein localises to the cytoplasm. The enzyme catalyses D-glyceraldehyde 3-phosphate = dihydroxyacetone phosphate. It functions in the pathway carbohydrate biosynthesis; gluconeogenesis. Its pathway is carbohydrate degradation; glycolysis; D-glyceraldehyde 3-phosphate from glycerone phosphate: step 1/1. Involved in the gluconeogenesis. Catalyzes stereospecifically the conversion of dihydroxyacetone phosphate (DHAP) to D-glyceraldehyde-3-phosphate (G3P). In Buchnera aphidicola subsp. Schizaphis graminum (strain Sg), this protein is Triosephosphate isomerase.